We begin with the raw amino-acid sequence, 694 residues long: Follicle-stimulating hormone receptor (694 aa).

A signal peptide spans 1–17; sequence MAFLWISFLVFLGSGSG. Cystine bridges form between Cys18/Cys25 and Cys23/Cys32. Residues 18–46 form the LRRNT domain; it reads CHHRICHCSDRVFICQESKVTEIPSDIPR. Topologically, residues 18–367 are extracellular; sequence CHHRICHCSD…EDIMGYNFLR (350 aa). 9 LRR repeats span residues 49–72, 73–97, 98–118, 119–143, 144–169, 170–192, 193–216, 217–240, and 241–259; these read VEMRFVLTKLQVIPRGAFSGFRDL, EKIEISQNDALEVIEADVFSNLPKL, HEIRIEKANNLVLIDPEAFWN, LPNLRYLLISNTGIKHLPAVYKIQS, HQKVLLDIQDNINIRTIERNSFAGLS, SESEILWLNKNGIQEIQNQAFNG, TQLDELNLSDNINLEDLPNGIFQG, ANGPVILDISRTRIHSLPSDGLKN, and LKKLKARSAYNFKTLPNLD. Residues Asn191 and Asn199 are each glycosylated (N-linked (GlcNAc...) asparagine). Asn268 carries N-linked (GlcNAc...) asparagine glycosylation. Disulfide bonds link Cys275-Cys347, Cys276-Cys292, Cys276-Cys357, and Cys292-Cys339. A glycan (N-linked (GlcNAc...) asparagine) is linked at Asn293. Tyr336 carries the sulfotyrosine modification. A helical membrane pass occupies residues 368–388; sequence VLIWFISILSITGNIVVLVIL. Over 389–399 the chain is Cytoplasmic; it reads ITSQYKLTVPR. A helical membrane pass occupies residues 400-422; sequence FLMCNLAFADLCIGIYLLLIASV. Residues 423 to 444 lie on the Extracellular side of the membrane; that stretch reads DIHTKSQYHNYAIDWQTGAGCD. The cysteines at positions 443 and 518 are disulfide-linked. Residues 445 to 466 form a helical membrane-spanning segment; that stretch reads AAGFFTVFASELSVYTLTAITL. Over 467 to 486 the chain is Cytoplasmic; that stretch reads ERWHTITYAMQLDRKVRLRH. A helical transmembrane segment spans residues 487–509; it reads AASIMLIGWIFAFSVALLPIFGV. At 510-529 the chain is on the extracellular side; it reads SSYMKVSICLPMDIDSPLSQ. The helical transmembrane segment at 530–551 threads the bilayer; that stretch reads FYVISLLVLNVLASVIICTCYT. Residues 552-574 lie on the Cytoplasmic side of the membrane; that stretch reads HIYFTVRNPNIISSTSDAKIAKR. The chain crosses the membrane as a helical span at residues 575–598; sequence MAMLIFTDFLCMAPISFFAISASV. The Extracellular segment spans residues 599–609; that stretch reads KMPLITVSKSK. Residues 610–631 traverse the membrane as a helical segment; sequence ILLVLFYPINSCANPFLYAVFT. The Cytoplasmic portion of the chain corresponds to 632–694; sequence KTFRRDFFIL…YKLVPLNHLS (63 aa).

It belongs to the G-protein coupled receptor 1 family. FSH/LSH/TSH subfamily. As to quaternary structure, homotrimer. Functions as a homotrimer binding the FSH hormone heterodimer composed of CGA and FSHB. Interacts with ARRB2. Interacts with APPL2; interaction is independent of follicle stimulating hormone stimulation. N-glycosylated; indirectly required for FSH-binding, possibly via a conformational change that allows high affinity binding of hormone. Post-translationally, sulfated.

The protein resides in the cell membrane. G protein-coupled receptor for follitropin, the follicle-stimulating hormone. Through cAMP production activates the downstream PI3K-AKT and ERK1/ERK2 signaling pathways. The chain is Follicle-stimulating hormone receptor (FSHR) from Notamacropus eugenii (Tammar wallaby).